The following is a 1143-amino-acid chain: uncharacterized protein (1143 aa).

The first 20 residues, 1-20 (MKLLLLALILVLSNINLISG), serve as a signal peptide directing secretion. Residues 21-1121 (NGLVWPHPRL…PAAGGEDSSA (1101 aa)) are Extracellular-facing. A compositionally biased stretch (gly residues) spans 177-203 (NSGGSWSSGGSGNSGGGWSSGGSGNSG). The disordered stretch occupies residues 177-1120 (NSGGSWSSGG…EPAAGGEDSS (944 aa)). The segment covering 222–236 (SSGGWTSGSHSSGSW) has biased composition (low complexity). Positions 237 to 283 (SSGGGSGSSSGGQSSGSWSSGGGSSSGGHSSGSWSSGGGSSAGGGSS) are enriched in gly residues. Over residues 284–296 (SGSHSSGSWSSGG) the composition is skewed to low complexity. Residues 297–330 (SSSGGQSSGSWSSGGGSSSGGQSSGSWSSGGGSS) are compositionally biased toward gly residues. A compositionally biased stretch (low complexity) spans 331 to 368 (SGSHSSGSWSSGGSSSGSHSSGSWSSGGSSSSSGNSGW). Positions 374-392 (GNTGGNTGGNTGGNTGGQS) are enriched in gly residues. The segment covering 393 to 403 (SGNSGWMTASG) has biased composition (low complexity). Gly residues-rich tracts occupy residues 404 to 418 (GNTG…GGQS) and 430 to 444 (GNTG…GGQS). Low complexity-rich tracts occupy residues 445 to 498 (SGSS…TSSG) and 506 to 541 (GSSS…SSGD). 6 stretches are compositionally biased toward gly residues: residues 555–573 (GNTG…GGNS), 580–596 (GNSG…GGNS), 604–622 (GNTG…GGNS), 629–783 (GNSG…GGNS), 790–843 (GNSG…GGAS), and 851–905 (GNSG…GGNS). Low complexity predominate over residues 906–1059 (GAATGANSGA…GGNGASGAAN (154 aa)). The span at 1062–1078 (SIVTPNDQNVSPLSNSD) shows a compositional bias: polar residues. The span at 1094–1114 (PTSRAPTVTPTPTSSAEEPAA) shows a compositional bias: low complexity. Residues 1122–1142 (ISKYSIQSFGIFVLSMIIYLV) form a helical membrane-spanning segment. Position 1143 (I1143) is a topological domain, cytoplasmic.

It is found in the membrane. This is an uncharacterized protein from Dictyostelium discoideum (Social amoeba).